Consider the following 190-residue polypeptide: Elongation factor P-like protein (190 aa).

Belongs to the elongation factor P family.

In Escherichia fergusonii (strain ATCC 35469 / DSM 13698 / CCUG 18766 / IAM 14443 / JCM 21226 / LMG 7866 / NBRC 102419 / NCTC 12128 / CDC 0568-73), this protein is Elongation factor P-like protein.